A 291-amino-acid chain; its full sequence is Putative fatty acid elongase 4 (291 aa).

The next 3 helical transmembrane spans lie at 46–66 (ILFQ…FILI), 79–99 (FTLK…SIIA), and 254–274 (NLYL…QFFV).

Belongs to the ELO family.

It localises to the membrane. The enzyme catalyses a very-long-chain acyl-CoA + malonyl-CoA + H(+) = a very-long-chain 3-oxoacyl-CoA + CO2 + CoA. It functions in the pathway lipid metabolism; fatty acid biosynthesis. In terms of biological role, could be implicated in synthesis of very long chain fatty acids. This is Putative fatty acid elongase 4 (elo-4) from Caenorhabditis elegans.